Here is a 266-residue protein sequence, read N- to C-terminus: Interleukin-1 beta (266 aa).

The propeptide occupies 1 to 114; it reads MAAVPELTSE…KTDADNFMSD (114 aa).

It belongs to the IL-1 family. In terms of assembly, monomer. In its precursor form, weakly interacts with full-length MEFV; the mature cytokine does not interact at all. Interacts with integrins ITGAV:ITGBV and ITGA5:ITGB1; integrin-binding is required for IL1B signaling. Interacts with cargo receptor TMED10; the interaction is direct and is required for the secretion of IL1B mature form. Interacts with HSP90AB1; the interaction facilitates cargo translocation into the ERGIC. Interacts with HSP90B1; the interaction facilitates cargo translocation into the ERGIC.

It is found in the cytoplasm. Its subcellular location is the cytosol. The protein resides in the secreted. It localises to the lysosome. The protein localises to the extracellular exosome. In terms of biological role, potent pro-inflammatory cytokine. Initially discovered as the major endogenous pyrogen, induces prostaglandin synthesis, neutrophil influx and activation, T-cell activation and cytokine production, B-cell activation and antibody production, and fibroblast proliferation and collagen production. Promotes Th17 differentiation of T-cells. Synergizes with IL12/interleukin-12 to induce IFNG synthesis from T-helper 1 (Th1) cells. Plays a role in angiogenesis by inducing VEGF production synergistically with TNF and IL6. Involved in transduction of inflammation downstream of pyroptosis: its mature form is specifically released in the extracellular milieu by passing through the gasdermin-D (GSDMD) pore. The protein is Interleukin-1 beta (IL1B) of Canis lupus familiaris (Dog).